Reading from the N-terminus, the 1023-residue chain is MFHLRTCAAKLRPLTASQTVKTFSQNRPAAARTFQQIRCYSAPVAAEPFLSGTSSNYVEEMYCAWLENPKSVHKSWDIFFRNTNAGAPPGTAYQSPLPLSRGSLAAVAHAQSLVEAQPNVDKLVEDHLAVQSLIRAYQIRGHHVAQLDPLGILDADLDSSVPADIISSTDKLGFYGLDESDLDKVFHLPTTTFIGGQESALPLREIIRRLEMAYCQHIGVEFMFINDLEQCQWIRQKFETPGIMQFTNEEKRTLLARLVRSTRFEEFLQRKWSSEKRFGLEGCEVLIPALKTIIDKSSENGVDYVIMGMPHRGRLNVLANVIRKELEQIFCQFDSKLEAADEGSGDVKYHLGMYHRRINRVTDRNITLSLVANPSHLEAADPVVMGKTKAEQFYCGDTEGKKVMSILLHGDAAFAGQGIVYETFHLSDLPSYTTHGTVHVVVNNQIGFTTDPRMARSSPYPTDVARVVNAPIFHVNSDDPEAVMYVCKVAAEWRSTFHKDVVVDLVCYRRNGHNEMDEPMFTQPLMYKQIRKQKPVLQKYAELLVSQGVVNQPEYEEEISKYDKICEEAFARSKDEKILHIKHWLDSPWPGFFTLDGQPRSMSCPSTGLTEDILTHIGNVASSVPVENFTIHGGLSRILKTRGEMVKNRTVDWALAEYMAFGSLLKEGIHIRLSGQDVERGTFSHRHHVLHDQNVDKRTCIPMNHLWPNQAPYTVCNSSLSEYGVLGFELGFAMASPNALVLWEAQFGDFHNTAQCIIDQFICPGQAKWVRQNGIVLLLPHGMEGMGPEHSSARPERFLQMCNDDPDVLPDLKEANFDINQLHDCNWVVVNCSTPGNFFHVLRRQILLPFRKPLIIFTPKSLLRHPEARSSFDEMLPGTHFQRVIPEDGPAAQNPENVKRLLFCTGKVYYDLTRERKARDMVGQVAITRIEQLSPFPFDLLLKEVQKYPNAELAWCQEEHKNQGYYDYVKPRLRTTISRAKPVWYAGRDPAAAPATGNKKTHLTELQRLLDTAFDLDVFKNFS.

The transit peptide at 1-40 (MFHLRTCAAKLRPLTASQTVKTFSQNRPAAARTFQQIRCY) directs the protein to the mitochondrion. Residue K74 is modified to N6-succinyllysine. The residue at position 100 (S100) is a Phosphoserine. H143, D156, and D158 together coordinate Ca(2+). R312 serves as a coordination point for thiamine diphosphate. K401 bears the N6-acetyllysine mark. Thiamine diphosphate contacts are provided by D411, N444, and I446. D411, N444, and I446 together coordinate Mg(2+). Residue K534 forms a Glycyl lysine isopeptide (Lys-Gly) (interchain with G-Cter in ubiquitin) linkage. Position 564 is an N6-succinyllysine (K564). Residue Q676 coordinates thiamine diphosphate. K970 carries the N6-acetyllysine modification.

The protein belongs to the alpha-ketoglutarate dehydrogenase family. As to quaternary structure, homodimer. The 2-oxoglutarate dehydrogenase complex is composed of OGDH (2-oxoglutarate dehydrogenase; E1), DLST (dihydrolipoamide succinyltransferase; E2), DLD (dihydrolipoamide dehydrogenase; E3) and the assembly factor KGD4. It contains multiple copies of the three enzymatic components (E1, E2 and E3). In the nucleus, the 2-oxoglutarate dehydrogenase complex associates with KAT2A. Interacts with ABHD11; this interaction maintains the functional lipoylation of the 2-oxoglutarate dehydrogenase complex. The cofactor is thiamine diphosphate. Mg(2+) is required as a cofactor.

The protein resides in the mitochondrion. Its subcellular location is the nucleus. The enzyme catalyses N(6)-[(R)-lipoyl]-L-lysyl-[protein] + 2-oxoglutarate + H(+) = N(6)-[(R)-S(8)-succinyldihydrolipoyl]-L-lysyl-[protein] + CO2. Its activity is regulated as follows. Calcium ions and ADP stimulate, whereas ATP and NADH reduce catalytic activity. Functionally, 2-oxoglutarate dehydrogenase (E1o) component of the 2-oxoglutarate dehydrogenase complex (OGDHC). Participates in the first step, rate limiting for the overall conversion of 2-oxoglutarate to succinyl-CoA and CO(2) catalyzed by the whole OGDHC. Catalyzes the irreversible decarboxylation of 2-oxoglutarate (alpha-ketoglutarate) via the thiamine diphosphate (ThDP) cofactor and subsequent transfer of the decarboxylated acyl intermediate on an oxidized dihydrolipoyl group that is covalently amidated to the E2 enzyme (dihydrolipoyllysine-residue succinyltransferase or DLST). Plays a key role in the Krebs (citric acid) cycle, which is a common pathway for oxidation of fuel molecules, including carbohydrates, fatty acids, and amino acids. Can catalyze the decarboxylation of 2-oxoadipate in vitro, but at a much lower rate than 2-oxoglutarate. Mainly active in the mitochondrion. A fraction of the 2-oxoglutarate dehydrogenase complex also localizes in the nucleus and is required for lysine succinylation of histones: associates with KAT2A on chromatin and provides succinyl-CoA to histone succinyltransferase KAT2A. The polypeptide is 2-oxoglutarate dehydrogenase complex component E1 (Macaca fascicularis (Crab-eating macaque)).